A 663-amino-acid polypeptide reads, in one-letter code: MSLFVAVENIEKSFPLSGGNEYLALKGIDLEIKQGEFISLIGHSGCGKSTLLNLIAGLELPTDGAVSLEGQQITAPGPDRMVVFQNYSLFPWLTVRENIALAVDEVLRDLPKEERQAIVEEHIQLVGLGHAADKPPAQLSGGMKQRVAIARGLATRPKLLLLDEPFGALDALTRGNLQEKLMQICEENHVTAVMVTHDVDEAVLLSDRIVMLTNGPGSKIGGILEVDIPRPRKRMDVVHHPSYYSLRSEIIYFLNQQKRVKKLNARKVTTVARHGLEKVNLEIGYVPLMACAPLVVAQEKAFFAKHGLDEVSLVRETSWRGIVDGLTENYLDAAQMPAGMPVWMSVGGQGGSPLPIVSSLTMSRNGNGITLSKALYDEGIQTVDDFRNLLRSTADKQHIMGIVHPASMHNLLLRYWLAANQIDPDRDVQLRTIPPAQMVADLKDGTIDGYCIGEPWNAWAAQKEIGFTIASDLEIWNGHPGKVLGVREDWANRYPNSHVALVKALLEACQYCEDPANWDELRELLSDRRYLSCPKEYIQFSQSTADDLAVPHHRFAGAGVNRPSRTEHLWMMTQLARWGDVPFPRNWVEILERVCRVGVFSTAARELGLSEVVNYQRSTPVELFDGVPFNAEDPIAYLNSLPIHRDFSVAEIALDQPRPIAAA.

The ABC transporter domain maps to 5-239 (VAVENIEKSF…RPRKRMDVVH (235 aa)). 42–49 (GHSGCGKS) serves as a coordination point for ATP. Residues 281 to 663 (LEIGYVPLMA…LDQPRPIAAA (383 aa)) are cmpA-like.

This sequence belongs to the ABC transporter superfamily. Nitrate/nitrite/cyanate uptake transporter (NitT) (TC 3.A.1.16) family. The complex is composed of two ATP-binding proteins (CmpC and CmpD), a transmembrane protein (CmpB) and a solute-binding protein (CmpA).

It is found in the cell inner membrane. In terms of biological role, part of the ABC transporter complex CmpABCD involved in bicarbonate transport. Responsible for energy coupling to the transport system. This chain is Bicarbonate transport ATP-binding protein CmpC (cmpC), found in Synechococcus elongatus (strain ATCC 33912 / PCC 7942 / FACHB-805) (Anacystis nidulans R2).